Reading from the N-terminus, the 894-residue chain is Exocyst complex component 2 (894 aa).

The IPT/TIG domain occupies 5–89 (PVVTGLSPKE…GTSTVQFRAY (85 aa)). A compositionally biased stretch (basic and acidic residues) spans 398–413 (HTSKDSGAQEKAKNRD). The interval 398–417 (HTSKDSGAQEKAKNRDSSQA) is disordered.

The protein belongs to the SEC5 family. In terms of assembly, the exocyst complex is composed of Sec3/Exoc1, Sec5/Exoc2, Sec6/Exoc3, Sec8/Exoc4, Sec10/Exoc5, Sec15/Exoc6, Exo70/Exoc7 and Exo84/Exoc8.

Functionally, component of the exocyst complex involved in the docking of exocytic vesicles with fusion sites on the plasma membrane. The polypeptide is Exocyst complex component 2 (Drosophila melanogaster (Fruit fly)).